A 282-amino-acid polypeptide reads, in one-letter code: Protoheme IX farnesyltransferase (282 aa).

9 helical membrane passes run 9-29 (LAKPGIIFGNLITLTGGFLLA), 39-59 (LPLFVYVMIGVALMIAAGCVF), 79-99 (LVTGDISVIQATIYGTILLIL), 102-122 (LVLYYLVNLLTLWIIIIGFIV), 139-159 (VLGGISGAIPPVAGYTAVVNI), 165-185 (LALFLILFFWQIPHSYAIAML), 210-230 (IMLFYLALFVVSCALPAVLGS), 231-251 (ADLFSFIVCMLVALFWMYKSI), and 261-281 (VFAKTVFKFSIIVITAICLTM).

Belongs to the UbiA prenyltransferase family. Protoheme IX farnesyltransferase subfamily.

Its subcellular location is the cell inner membrane. It catalyses the reaction heme b + (2E,6E)-farnesyl diphosphate + H2O = Fe(II)-heme o + diphosphate. The protein operates within porphyrin-containing compound metabolism; heme O biosynthesis; heme O from protoheme: step 1/1. In terms of biological role, converts heme B (protoheme IX) to heme O by substitution of the vinyl group on carbon 2 of heme B porphyrin ring with a hydroxyethyl farnesyl side group. The chain is Protoheme IX farnesyltransferase from Francisella tularensis subsp. holarctica (strain LVS).